The primary structure comprises 103 residues: Large ribosomal subunit protein bL36m (103 aa).

This sequence belongs to the bacterial ribosomal protein bL36 family. Component of the mitochondrial large ribosomal subunit (mt-LSU). Mature mammalian 55S mitochondrial ribosomes consist of a small (28S) and a large (39S) subunit. The 28S small subunit contains a 12S ribosomal RNA (12S mt-rRNA) and 30 different proteins. The 39S large subunit contains a 16S rRNA (16S mt-rRNA), a copy of mitochondrial valine transfer RNA (mt-tRNA(Val)), which plays an integral structural role, and 52 different proteins. bL36m has a zinc binding site.

The protein localises to the mitochondrion. The sequence is that of Large ribosomal subunit protein bL36m (MRPL36) from Homo sapiens (Human).